The following is a 328-amino-acid chain: Cytochrome c biogenesis protein CcsA (328 aa).

The next 8 helical transmembrane spans lie at 13-33 (ISFS…LVNL), 46-66 (GIII…IYSG), 73-93 (LYES…VSYF), 101-121 (LNAI…SGLL), 146-166 (MILG…LLVI), 234-254 (IISL…VWAN), 263-283 (WDPK…YLHI), and 295-315 (AIVA…VNLL).

It belongs to the CcmF/CycK/Ccl1/NrfE/CcsA family. May interact with Ccs1.

It is found in the plastid. The protein localises to the chloroplast thylakoid membrane. Required during biogenesis of c-type cytochromes (cytochrome c6 and cytochrome f) at the step of heme attachment. The polypeptide is Cytochrome c biogenesis protein CcsA (Capsella bursa-pastoris (Shepherd's purse)).